We begin with the raw amino-acid sequence, 223 residues long: Cytidylate kinase (223 aa).

10 to 18 (GPASSGKST) serves as a coordination point for ATP.

The protein belongs to the cytidylate kinase family. Type 1 subfamily.

Its subcellular location is the cytoplasm. It catalyses the reaction CMP + ATP = CDP + ADP. The enzyme catalyses dCMP + ATP = dCDP + ADP. This Streptococcus pneumoniae serotype 4 (strain ATCC BAA-334 / TIGR4) protein is Cytidylate kinase.